We begin with the raw amino-acid sequence, 64 residues long: Arasin 1 (64 aa).

Residues 1–25 (MERRTLLVVLLVCSCVVAAAAEASP) form the signal peptide. The interval 22–43 (EASPSRWPSPGRPRPFPGRPKP) is disordered. Residues 26-48 (SRWPSPGRPRPFPGRPKPIFRPR) form a pro/Arg-rich region responsible for antibacterial and antifungal activity region. A compositionally biased stretch (pro residues) spans 31 to 43 (PGRPRPFPGRPKP). Positions 49–62 (PCNCYAPPCPCDRW) are cystein-containing C-terminal region important for stability but not essential for antimicrobial activity. Cystine bridges form between cysteine 50–cysteine 59 and cysteine 52–cysteine 57. A propeptide spanning residues 63 to 64 (RH) is cleaved from the precursor.

In terms of assembly, interacts with chitin through the N-terminal region (26-48). This interaction may be important, since chitin is a component of the fungal cell wall, as well as of the crab exoskeleton (permitting a possible action of arasin in wound healing in case of lesions). Disulfide bonds are important for activity especially against Gram-negative bacteria, since the linearization of the peptide causes a strong decrease of activity on these bacteria. As to expression, mainly expressed in hemocytes. No or very low expression in heart, gills, inestines, and epidermis.

Antimicrobial peptide that has a large activity spectrum with activity against Gram-positive, Gram-negative bacteria, as well as against fungi. Shows activity at micromolar concentrations. Displays minimal inhibitory concentration (MIC) values lower than minimal bactericidal concentrations (MBC). Synthetic peptides with similar activities than the full length peptide (composed of the first 23 or 25 amino acids (Arasin 1(26-48) or Arasin 1(26-50))) may have a dual mode of action depending on the peptide concentrations. At MIC concentrations, the peptide penetrates into the cytoplasm of target cells (tested on the Gram-negative E.coli). The two inner membrane proteins YgdD and SbmA may be required for this uptake. At concentrations higher than MIC, arasin may act by disrupting membranes. Full-length and N-terminal peptides do not show hemolytic activity. The chain is Arasin 1 from Hyas araneus (Atlantic lyre crab).